Reading from the N-terminus, the 266-residue chain is tRNA dimethylallyltransferase (266 aa).

Belongs to the IPP transferase family. In terms of assembly, monomer. Mg(2+) serves as cofactor.

It catalyses the reaction adenosine(37) in tRNA + dimethylallyl diphosphate = N(6)-dimethylallyladenosine(37) in tRNA + diphosphate. Its function is as follows. Catalyzes the transfer of a dimethylallyl group onto the adenine at position 37 in tRNAs that read codons beginning with uridine, leading to the formation of N6-(dimethylallyl)adenosine (i(6)A). The sequence is that of tRNA dimethylallyltransferase (miaA) from Helicobacter acinonychis (strain Sheeba).